Consider the following 443-residue polypeptide: Acyl transferase 10 (443 aa).

Residues H182 and D386 each act as proton acceptor in the active site.

The protein belongs to the plant acyltransferase family.

Functionally, involved in the incorporation of ferulate into the cell wall. May act as arabinoxylan feruloyl transferase. May function as p-coumaroyl-CoA transferase involved in glucuronoarabinoxylan modification. The sequence is that of Acyl transferase 10 from Oryza sativa subsp. japonica (Rice).